The chain runs to 636 residues: Rik1-associated factor 2 (636 aa).

In terms of assembly, component of the Clr4 methyltransferase complex (ClrC) composed of at least clr4, rik1, pcu4, rbx1, raf1 and raf2. The cullin pcu4, rik1, raf1, raf2 and the ring-box protein rbx1 are components of an E3 ubiquitin ligase, whose activity is essential for heterochromatin assembly. Interacts with pcu4.

It localises to the cytoplasm. It is found in the mitochondrion. Its subcellular location is the nucleus. The protein localises to the chromosome. Component of the Clr4 methyltransferase complex (ClrC) which contributes to the establishment of heterochromatin by specifically methylating histone H3 to form H3K9me. ClrC preferentially ubiquitylates H3K14 and ClrC-mediated H3 ubiquitination promotes clr4 methyltransferase activity for the methylation of H3K9. H3K9me represents a specific tag for epigenetic transcriptional repression by recruiting swi6/HP1 to methylated histones which leads to transcriptional silencing within centromeric heterochromatin, telomeric regions and at the silent mating-type loci. Has a role in both mitotic and meiotic chromosome segregation. This is Rik1-associated factor 2 (raf2) from Schizosaccharomyces pombe (strain 972 / ATCC 24843) (Fission yeast).